A 315-amino-acid polypeptide reads, in one-letter code: Methionyl-tRNA formyltransferase (315 aa).

113–116 (SLLP) provides a ligand contact to (6S)-5,6,7,8-tetrahydrofolate.

This sequence belongs to the Fmt family.

It carries out the reaction L-methionyl-tRNA(fMet) + (6R)-10-formyltetrahydrofolate = N-formyl-L-methionyl-tRNA(fMet) + (6S)-5,6,7,8-tetrahydrofolate + H(+). Attaches a formyl group to the free amino group of methionyl-tRNA(fMet). The formyl group appears to play a dual role in the initiator identity of N-formylmethionyl-tRNA by promoting its recognition by IF2 and preventing the misappropriation of this tRNA by the elongation apparatus. This chain is Methionyl-tRNA formyltransferase, found in Shigella boydii serotype 18 (strain CDC 3083-94 / BS512).